Consider the following 173-residue polypeptide: Ribosome maturation factor RimM (173 aa).

Residues 98–170 (EDEYYWCDLI…RMLITPLEGL (73 aa)) enclose the PRC barrel domain.

This sequence belongs to the RimM family. Binds ribosomal protein uS19.

It is found in the cytoplasm. In terms of biological role, an accessory protein needed during the final step in the assembly of 30S ribosomal subunit, possibly for assembly of the head region. Essential for efficient processing of 16S rRNA. May be needed both before and after RbfA during the maturation of 16S rRNA. It has affinity for free ribosomal 30S subunits but not for 70S ribosomes. The chain is Ribosome maturation factor RimM from Pelobacter propionicus (strain DSM 2379 / NBRC 103807 / OttBd1).